Consider the following 127-residue polypeptide: Nitrogenase-stabilizing/protective protein NifW (127 aa).

This sequence belongs to the NifW family. In terms of assembly, homotrimer; associates with NifD.

Its function is as follows. May protect the nitrogenase Fe-Mo protein from oxidative damage. In Rhizobium etli (strain ATCC 51251 / DSM 11541 / JCM 21823 / NBRC 15573 / CFN 42), this protein is Nitrogenase-stabilizing/protective protein NifW.